The following is a 109-amino-acid chain: Glutaredoxin-8 (109 aa).

The region spanning 5–109 (VTKAEEMIKS…EELTKIGLLP (105 aa)) is the Glutaredoxin domain. The cysteines at positions 25 and 28 are disulfide-linked.

It belongs to the glutaredoxin family. Monomer.

Its subcellular location is the cytoplasm. Functionally, glutathione-dependent oxidoreductase with lower activity compared to the other members of the glutaredoxin family. The disulfide bond functions as an electron carrier in the glutathione-dependent synthesis of deoxyribonucleotides by the enzyme ribonucleotide reductase. This is Glutaredoxin-8 (GRX8) from Saccharomyces cerevisiae (strain ATCC 204508 / S288c) (Baker's yeast).